The primary structure comprises 314 residues: Oxidoreductase poxI (314 aa).

Belongs to the NmrA-type oxidoreductase family. Isoflavone reductase subfamily.

The protein operates within secondary metabolite biosynthesis. Oxidoreductase; part of the gene cluster that mediates the biosynthesis of oxaleimides, cytotoxic compounds containing an unusual disubstituted succinimide moiety. The first step of the pathway is provided by the HR-PKS poxF that serves in a new mode of collaborative biosynthesis with the PKS-NRPS poxE, by providing the olefin containing amino acid substrate via the synthesis of an ACP-bound dec-4-enoate. The cytochrome P450 monooxygenase poxM-catalyzed oxidation at the alpha-position creates the enzyme-bound 2-hydroxydec-4-enoyl-ACP thioester, which may be prone to spontaneous hydrolysis to yield 2-hydroxydec-4-enoic acid due to increased electrophilicity of the carbonyl. 2-hydroxydec-4-enoic acid can then be further oxidized by poxM to yield the alpha-ketoacid 2-oxodec-4-enoicacid, which is reductively aminated by the aminotransferase poxL to yield (S,E)-2-aminodec-4-enoic acid. The Hybrid PKS-NRPS synthetase poxE then performs condensation between the octaketide product of its PKS modules and the amino group of (S,E)-2-aminodec-4-enoic acid which is activated and incorporated by the adenylation domain. The resulting aminoacyl product can be cyclized by the Diels-Alderase PoxQ and reductively released by the reductive (R) domain of poxE to yield an aldehyde intermediate. The released aldehyde is then substrate for a Knoevenagel condensation by the hydrolyase poxO followed by an oxidation at the 5-position of the pyrrolidone ring. The presence of the olefin from the amino acid building block allows for migration of the substituted allyl group to occur. This allylic transposition reaction takes place in a conjugate addition, semipinacol-like fashion to yield a succinimide intermediate. Iterative two-electron oxidations of the C7 methyl of the succinimide intermediate to the carboxylic acid can be catalyzed by one of two remaining cytochrome P450 monooxygenasess poxC or poxD to yield oxaleimide A. Subsequent oxidation yields the maleimide scaffold oxaleimide I. Both oxaleimide A and oxaleimide I can undergo oxidative modifications in the decalin ring to yield the series of products oxaleimides B to H. This chain is Oxidoreductase poxI, found in Penicillium oxalicum (strain 114-2 / CGMCC 5302) (Penicillium decumbens).